Reading from the N-terminus, the 339-residue chain is Glycerol-3-phosphate dehydrogenase [NAD(P)+] (339 aa).

NADPH-binding residues include Ser-15, Trp-16, His-36, and Lys-110. Residues Lys-110, Gly-144, and Ser-146 each coordinate sn-glycerol 3-phosphate. Ala-148 contributes to the NADPH binding site. Residues Lys-199, Asp-252, Ser-262, Arg-263, and Asn-264 each contribute to the sn-glycerol 3-phosphate site. The active-site Proton acceptor is the Lys-199. Arg-263 is a binding site for NADPH. NADPH is bound by residues Val-287 and Glu-289.

Belongs to the NAD-dependent glycerol-3-phosphate dehydrogenase family.

It localises to the cytoplasm. It carries out the reaction sn-glycerol 3-phosphate + NAD(+) = dihydroxyacetone phosphate + NADH + H(+). It catalyses the reaction sn-glycerol 3-phosphate + NADP(+) = dihydroxyacetone phosphate + NADPH + H(+). The protein operates within membrane lipid metabolism; glycerophospholipid metabolism. Its function is as follows. Catalyzes the reduction of the glycolytic intermediate dihydroxyacetone phosphate (DHAP) to sn-glycerol 3-phosphate (G3P), the key precursor for phospholipid synthesis. The polypeptide is Glycerol-3-phosphate dehydrogenase [NAD(P)+] (Desulfotalea psychrophila (strain LSv54 / DSM 12343)).